A 69-amino-acid polypeptide reads, in one-letter code: Metallothionein-like protein CRS5 (69 aa).

Belongs to the metallothionein superfamily. Type 13 family.

Functionally, critical role in copper (specific) homeostasis and detoxification. May protect by directly chelating and sequestering copper ions. The protein is Metallothionein-like protein CRS5 (CRS5) of Saccharomyces cerevisiae (strain RM11-1a) (Baker's yeast).